We begin with the raw amino-acid sequence, 373 residues long: D-alanine--D-alanine ligase (373 aa).

In terms of domain architecture, ATP-grasp spans 156–363 (KKLLAADGLP…YPTLLATMIE (208 aa)). 184–239 (CERLGLPVFVKPARGGSSIGVSRVSSWDQLPAAVARARRHDPKVIVEAAISGRELE) contributes to the ATP binding site. Residues Asp-318, Glu-330, and Asn-332 each coordinate Mg(2+).

It belongs to the D-alanine--D-alanine ligase family. The cofactor is Mg(2+). Requires Mn(2+) as cofactor.

Its subcellular location is the cytoplasm. It carries out the reaction 2 D-alanine + ATP = D-alanyl-D-alanine + ADP + phosphate + H(+). Its pathway is cell wall biogenesis; peptidoglycan biosynthesis. In terms of biological role, cell wall formation. The chain is D-alanine--D-alanine ligase from Mycobacterium tuberculosis (strain ATCC 25177 / H37Ra).